The sequence spans 2335 residues: Histone-lysine N-methyltransferase ATXR3 (2335 aa).

4 disordered regions span residues 30–142, 332–355, 371–556, and 902–961; these read NESK…FKDE, STGN…SYAD, CSRS…SSSK, and DQVP…KTDT. Polar residues-rich tracts occupy residues 31–46 and 53–62; these read ESKT…TSIA and QPANKPSASS. The segment covering 65–84 has biased composition (basic residues); it reads VKKKRIVKVIRKVVKRRPKQ. A Nuclear localization signal 1 motif is present at residues 67-74; the sequence is KKRIVKVI. Residues 97–112 show a composition bias toward polar residues; that stretch reads PPSQVVQLPAESQLQI. Basic and acidic residues-rich tracts occupy residues 340-353, 371-390, and 430-452; these read HGAE…KHSY, CSRS…RLYR, and WSPH…RERS. Residues 461–475 are compositionally biased toward basic residues; that stretch reads HARKRSPRDRRHHDY. Basic and acidic residues-rich tracts occupy residues 485–498, 507–548, and 910–921; these read SPHD…RRDY, QSDR…ESNG, and PRAKVRSKERCP. Positions 527 to 534 match the Nuclear localization signal 2 motif; it reads ERRDCQTG. Over residues 922–932 the composition is skewed to low complexity; sequence SRPARPSPASS. Positions 941–961 are enriched in polar residues; it reads SHSQSTASTGQDSQGLWKTDT. A Nuclear localization signal 3 motif is present at residues 1382–1389; that stretch reads ARRSSAIL. The disordered stretch occupies residues 1532-1572; that stretch reads NRKSFSSESDTSSELSDNGKSDNYSSASASESESDIRSEGR. Residues 1535–1547 show a composition bias toward low complexity; sequence SFSSESDTSSELS. In terms of domain architecture, SET spans 1765 to 1904; the sequence is KEIESRSDDK…YGEEITFDYN (140 aa). Cys1868 is a Zn(2+) binding site. Tyr1903 serves as a coordination point for S-adenosyl-L-methionine. A Post-SET domain is found at 1914–1930; the sequence is EASVCLCGSQVCRGSYL. Zn(2+) is bound by residues Cys1918, Cys1920, and Cys1925.

Belongs to the class V-like SAM-binding methyltransferase superfamily. Histone-lysine methyltransferase family. TRX/MLL subfamily. Expressed in roots, leaves, stems and inflorescences.

Its subcellular location is the nucleus. It carries out the reaction L-lysyl(4)-[histone H3] + 3 S-adenosyl-L-methionine = N(6),N(6),N(6)-trimethyl-L-lysyl(4)-[histone H3] + 3 S-adenosyl-L-homocysteine + 3 H(+). In terms of biological role, histone methyltransferase specifically required for trimethylation of 'Lys-4' of histone H3 (H3K4me3) and is crucial for both sporophyte and gametophyte development. Function as a diurnal 'writer' to counteract the nocturne 'eraser' demethylase activity of JMJ14 thus orchestrating the circadian rhythm of histone modifications (e.g. H3K4me3) and modulating the rhythmic expression of diurnal target genes; this mechanism relies also on the circadian clock oscillators CCA1 and LHY. In Arabidopsis thaliana (Mouse-ear cress), this protein is Histone-lysine N-methyltransferase ATXR3.